A 310-amino-acid polypeptide reads, in one-letter code: Methionyl-tRNA formyltransferase (310 aa).

Residue 114–117 (SLLP) coordinates (6S)-5,6,7,8-tetrahydrofolate.

This sequence belongs to the Fmt family.

It carries out the reaction L-methionyl-tRNA(fMet) + (6R)-10-formyltetrahydrofolate = N-formyl-L-methionyl-tRNA(fMet) + (6S)-5,6,7,8-tetrahydrofolate + H(+). In terms of biological role, attaches a formyl group to the free amino group of methionyl-tRNA(fMet). The formyl group appears to play a dual role in the initiator identity of N-formylmethionyl-tRNA by promoting its recognition by IF2 and preventing the misappropriation of this tRNA by the elongation apparatus. The chain is Methionyl-tRNA formyltransferase from Granulibacter bethesdensis (strain ATCC BAA-1260 / CGDNIH1).